The primary structure comprises 179 residues: Bifunctional protein PyrR (179 aa).

A PRPP-binding motif is present at residues 99–111 (VILIDDVLYTGRT).

It belongs to the purine/pyrimidine phosphoribosyltransferase family. PyrR subfamily. As to quaternary structure, homodimer and homohexamer; in equilibrium.

It carries out the reaction UMP + diphosphate = 5-phospho-alpha-D-ribose 1-diphosphate + uracil. Functionally, regulates transcriptional attenuation of the pyrimidine nucleotide (pyr) operon by binding in a uridine-dependent manner to specific sites on pyr mRNA. This disrupts an antiterminator hairpin in the RNA and favors formation of a downstream transcription terminator, leading to a reduced expression of downstream genes. Its function is as follows. Also displays a weak uracil phosphoribosyltransferase activity which is not physiologically significant. In Latilactobacillus sakei subsp. sakei (strain 23K) (Lactobacillus sakei subsp. sakei), this protein is Bifunctional protein PyrR.